The sequence spans 331 residues: Putative phosphoribosylaminoimidazole-succinocarboxamide synthase (331 aa).

The protein belongs to the SAICAR synthetase family. Highly divergent.

The catalysed reaction is 5-amino-1-(5-phospho-D-ribosyl)imidazole-4-carboxylate + L-aspartate + ATP = (2S)-2-[5-amino-1-(5-phospho-beta-D-ribosyl)imidazole-4-carboxamido]succinate + ADP + phosphate + 2 H(+). Its pathway is purine metabolism; IMP biosynthesis via de novo pathway; 5-amino-1-(5-phospho-D-ribosyl)imidazole-4-carboxamide from 5-amino-1-(5-phospho-D-ribosyl)imidazole-4-carboxylate: step 1/2. This is Putative phosphoribosylaminoimidazole-succinocarboxamide synthase (purC) from Archaeoglobus fulgidus (strain ATCC 49558 / DSM 4304 / JCM 9628 / NBRC 100126 / VC-16).